The primary structure comprises 138 residues: Large ribosomal subunit protein bL19 (138 aa).

Belongs to the bacterial ribosomal protein bL19 family.

In terms of biological role, this protein is located at the 30S-50S ribosomal subunit interface and may play a role in the structure and function of the aminoacyl-tRNA binding site. The protein is Large ribosomal subunit protein bL19 of Rickettsia conorii (strain ATCC VR-613 / Malish 7).